The following is a 96-amino-acid chain: Dynein light chain roadblock-type 1 (96 aa).

Ala2 is modified (N-acetylalanine).

It belongs to the GAMAD family. Homodimer. The cytoplasmic dynein 1 complex consists of two catalytic heavy chains (HCs) and a number of non-catalytic subunits presented by intermediate chains (ICs), light intermediate chains (LICs) and light chains (LCs); the composition seems to vary in respect to the IC, LIC and LC composition. The heavy chain homodimer serves as a scaffold for the probable homodimeric assembly of the respective non-catalytic subunits. The ICs and LICs bind directly to the HC dimer and the LCs assemble on the IC dimer. Interacts with DYNLRB2. Interacts with DYNC1I1 and DYNC1I2. Interacts with RAB6A isoform 1 (GTP-bound); the interaction is direct. Interacts with RAB6A isoform 2 (GDP-bound); the interaction is direct. Interacts with RAB6B (GDP-bound). In terms of tissue distribution, high expression in heart, liver, brain and pancreas; moderate in placenta, skeletal muscle and kidney; low in lung, prostate, testis, small intestine and colon. Isoform 1 expression is up-regulated in 64% hepatocellular carcinoma (HCC) patients.

Its subcellular location is the cytoplasm. It localises to the cytoskeleton. In terms of biological role, acts as one of several non-catalytic accessory components of the cytoplasmic dynein 1 complex that are thought to be involved in linking dynein to cargos and to adapter proteins that regulate dynein function. Cytoplasmic dynein 1 acts as a motor for the intracellular retrograde motility of vesicles and organelles along microtubules. The sequence is that of Dynein light chain roadblock-type 1 from Homo sapiens (Human).